A 49-amino-acid chain; its full sequence is uncharacterized protein (49 aa).

A helical membrane pass occupies residues 5 to 25 (LTTIFSVVIVLAIFLYFGLLI).

It belongs to the plectrovirus ORF12 protein family.

The protein localises to the host membrane. This is an uncharacterized protein from Spiroplasma virus SpV1-R8A2 B (SpV1).